The primary structure comprises 513 residues: Bifunctional pantoate ligase/cytidylate kinase (513 aa).

The tract at residues 1–282 is pantoate--beta-alanine ligase; it reads MGTFHRLTTT…VGQTRLIDNC (282 aa). Position 32 to 39 (32 to 39) interacts with ATP; that stretch reads MGALHGGH. H39 (proton donor) is an active-site residue. A (R)-pantoate-binding site is contributed by Q63. A beta-alanine-binding site is contributed by Q63. Position 152-155 (152-155) interacts with ATP; sequence GQKD. (R)-pantoate is bound at residue Q158. Residues V181 and 189-192 contribute to the ATP site; that span reads LSSR. A cytidylate kinase region spans residues 283 to 513; the sequence is LLDRRRPILA…HLYRSRFPQP (231 aa).

In the N-terminal section; belongs to the pantothenate synthetase family. It in the C-terminal section; belongs to the cytidylate kinase family. Type 1 subfamily.

It localises to the cytoplasm. The catalysed reaction is (R)-pantoate + beta-alanine + ATP = (R)-pantothenate + AMP + diphosphate + H(+). The enzyme catalyses CMP + ATP = CDP + ADP. It catalyses the reaction dCMP + ATP = dCDP + ADP. The protein operates within cofactor biosynthesis; (R)-pantothenate biosynthesis; (R)-pantothenate from (R)-pantoate and beta-alanine: step 1/1. Catalyzes the condensation of pantoate with beta-alanine in an ATP-dependent reaction via a pantoyl-adenylate intermediate. In terms of biological role, catalyzes the transfer of a phosphate group from ATP to either CMP or dCMP to form CDP or dCDP and ADP, respectively. In Thermosynechococcus vestitus (strain NIES-2133 / IAM M-273 / BP-1), this protein is Bifunctional pantoate ligase/cytidylate kinase.